Here is a 202-residue protein sequence, read N- to C-terminus: Superoxide dismutase [Mn] (202 aa).

Positions 27, 82, 164, and 168 each coordinate Mn(2+).

This sequence belongs to the iron/manganese superoxide dismutase family. Homodimer. Requires Mn(2+) as cofactor.

It carries out the reaction 2 superoxide + 2 H(+) = H2O2 + O2. Its function is as follows. Destroys superoxide anion radicals which are normally produced within the cells and which are toxic to biological systems. In Listeria monocytogenes serovar 1/2a (strain ATCC BAA-679 / EGD-e), this protein is Superoxide dismutase [Mn] (sodA).